A 250-amino-acid polypeptide reads, in one-letter code: MANGPTHQFLIFKIIPIDIGGIDFSFTNASLFMVASAVLSAGFLYFATSARSVIPGRSQSVAEMAYEFIASMLKEGAGTKGMKFFPLVFSLFMFVLTANLLGMVPYFYTVTSQIIVTFALALLVILTVILYGFIKHGFGFLKLFVPQGVPGILLPLVVIIEIISFLSRPISLSVRLFANMLAGHITLKVFAGFVASLGTLGALGIGGAILPLIMTVALTGLEFLVAFLQAYVFAVLTCMYLNDAVHPGGH.

Helical transmembrane passes span 29 to 49, 84 to 104, 114 to 134, 143 to 163, 185 to 205, and 208 to 228; these read ASLF…FATS, FFPL…LGMV, IIVT…YGFI, LFVP…IEII, ITLK…ALGI, and AILP…VAFL.

Belongs to the ATPase A chain family. In terms of assembly, F-type ATPases have 2 components, CF(1) - the catalytic core - and CF(0) - the membrane proton channel. CF(1) has five subunits: alpha(3), beta(3), gamma(1), delta(1), epsilon(1). CF(0) has three main subunits: a(1), b(2) and c(9-12). The alpha and beta chains form an alternating ring which encloses part of the gamma chain. CF(1) is attached to CF(0) by a central stalk formed by the gamma and epsilon chains, while a peripheral stalk is formed by the delta and b chains.

The protein localises to the cell inner membrane. Key component of the proton channel; it plays a direct role in the translocation of protons across the membrane. In Rhizobium rhizogenes (strain K84 / ATCC BAA-868) (Agrobacterium radiobacter), this protein is ATP synthase subunit a.